The following is a 406-amino-acid chain: Cysteine desulfurase (406 aa).

At Lys-226 the chain carries N6-(pyridoxal phosphate)lysine. Catalysis depends on Cys-364, which acts as the Cysteine persulfide intermediate.

Belongs to the class-V pyridoxal-phosphate-dependent aminotransferase family. Csd subfamily. As to quaternary structure, homodimer. Interacts with SufE and the SufBCD complex composed of SufB, SufC and SufD. The interaction with SufE is required to mediate the direct transfer of the sulfur atom from the S-sulfanylcysteine. The cofactor is pyridoxal 5'-phosphate.

Its subcellular location is the cytoplasm. It catalyses the reaction (sulfur carrier)-H + L-cysteine = (sulfur carrier)-SH + L-alanine. The enzyme catalyses L-selenocysteine + AH2 = hydrogenselenide + L-alanine + A + H(+). The protein operates within cofactor biosynthesis; iron-sulfur cluster biosynthesis. In terms of biological role, cysteine desulfurases mobilize the sulfur from L-cysteine to yield L-alanine, an essential step in sulfur metabolism for biosynthesis of a variety of sulfur-containing biomolecules. Component of the suf operon, which is activated and required under specific conditions such as oxidative stress and iron limitation. Acts as a potent selenocysteine lyase in vitro, that mobilizes selenium from L-selenocysteine. Selenocysteine lyase activity is however unsure in vivo. The protein is Cysteine desulfurase of Yersinia pestis bv. Antiqua (strain Antiqua).